A 98-amino-acid polypeptide reads, in one-letter code: Citrate lyase acyl carrier protein 1 (98 aa).

An O-(phosphoribosyl dephospho-coenzyme A)serine modification is found at Ser-14.

The protein belongs to the CitD family. As to quaternary structure, oligomer with a subunit composition of (alpha,beta,gamma)6.

It localises to the cytoplasm. In terms of biological role, covalent carrier of the coenzyme of citrate lyase. The protein is Citrate lyase acyl carrier protein 1 of Salmonella paratyphi A (strain ATCC 9150 / SARB42).